The chain runs to 514 residues: Chromosomal replication initiator protein DnaA (514 aa).

Residues 1–90 form a domain I, interacts with DnaA modulators region; the sequence is MSVELWQQCV…KRSRTPRAAI (90 aa). Residues 91–177 form a domain II region; the sequence is VPSQTHVAPP…QVEGALKHTS (87 aa). Positions 178-394 are domain III, AAA+ region; it reads YLNRTFTFEN…GALKRVIAHS (217 aa). Residues G222, G224, K225, and T226 each coordinate ATP. Residues 395-514 are domain IV, binds dsDNA; the sequence is HFMGRPITIE…YKNLLRTLTT (120 aa).

The protein belongs to the DnaA family. As to quaternary structure, oligomerizes as a right-handed, spiral filament on DNA at oriC.

The protein resides in the cytoplasm. Its function is as follows. Plays an essential role in the initiation and regulation of chromosomal replication. ATP-DnaA binds to the origin of replication (oriC) to initiate formation of the DNA replication initiation complex once per cell cycle. Binds the DnaA box (a 9 base pair repeat at the origin) and separates the double-stranded (ds)DNA. Forms a right-handed helical filament on oriC DNA; dsDNA binds to the exterior of the filament while single-stranded (ss)DNA is stabiized in the filament's interior. The ATP-DnaA-oriC complex binds and stabilizes one strand of the AT-rich DNA unwinding element (DUE), permitting loading of DNA polymerase. After initiation quickly degrades to an ADP-DnaA complex that is not apt for DNA replication. Binds acidic phospholipids. The sequence is that of Chromosomal replication initiator protein DnaA from Pseudomonas aeruginosa (strain LESB58).